A 421-amino-acid chain; its full sequence is MTVKYNQNGELTMDGISLKTIAQSFGTPTIVYDELQIREQMRRYHRAFKDSGLKYNISYASKAFTCIQMVKLVAEEDLQLDVVSEGELYTALEAGFEPSRIHFHGNNKTKHEIRYALENNIGYFVIDSLEEIELIDRYANDTVQVVLRVNPGVEAHTHEFIQTGQEDSKFGLSIQYGLAKKAIDKVQQSKHLKLKGVHCHIGSQIEGTEAFIETAKIVLRWLKEQGIQVELLNLGGGFGIKYVEGDESFPIESGIKDITDAIKSEIKVLGIDAPEIGIEPGRSIVGEAGVTLYEVGTIKEIPEINKYVSIDGGMSDHIRTALYDAKYQALLVNRNEEADDSVTIAGKLCESGDIIIKDAKLPSSVKRGDYLAILSTGAYHYSMASNYNQMQKPSVFFLKDGKAREVIKRQSLRQLIINDTK.

N6-(pyridoxal phosphate)lysine is present on Lys-62. Residues Gly-237 and 279 to 282 (EPGR) contribute to the pyridoxal 5'-phosphate site. 3 residues coordinate substrate: Arg-282, Arg-319, and Tyr-323. Catalysis depends on Cys-349, which acts as the Proton donor. Substrate-binding residues include Glu-350 and Tyr-379. Tyr-379 is a binding site for pyridoxal 5'-phosphate.

This sequence belongs to the Orn/Lys/Arg decarboxylase class-II family. LysA subfamily. As to quaternary structure, homodimer. Pyridoxal 5'-phosphate serves as cofactor.

It catalyses the reaction meso-2,6-diaminopimelate + H(+) = L-lysine + CO2. Its pathway is amino-acid biosynthesis; L-lysine biosynthesis via DAP pathway; L-lysine from DL-2,6-diaminopimelate: step 1/1. In terms of biological role, specifically catalyzes the decarboxylation of meso-diaminopimelate (meso-DAP) to L-lysine. Plays a role in beta-lactam antibiotic resistance. This Staphylococcus aureus (strain COL) protein is Diaminopimelate decarboxylase (lysA).